The chain runs to 202 residues: Tumor necrosis factor alpha-induced protein 8-like protein 3 (202 aa).

Residues 1 to 10 show a composition bias toward acidic residues; that stretch reads MDTDSGDLSE. Positions 1 to 24 are disordered; that stretch reads MDTDSGDLSEGELSPGPEQFSSKS.

It belongs to the TNFAIP8 family.

It localises to the cytoplasm. It is found in the cell membrane. Its function is as follows. May act as a lipid transfer protein. The protein is Tumor necrosis factor alpha-induced protein 8-like protein 3 (tnfaip8l3) of Xenopus laevis (African clawed frog).